Here is a 285-residue protein sequence, read N- to C-terminus: Protein HEXIM1 (285 aa).

2 disordered regions span residues 1–56 (MSEV…QNPG) and 132–196 (LMED…LQKD). Residues 23–36 (GGWHHPVEREEHPV) are compositionally biased toward basic and acidic residues. Positions 168 to 180 (TDDDLEEEEDEAG) are enriched in acidic residues. The stretch at 213–284 (SKQDLIKEYL…QEGKQVAADS (72 aa)) forms a coiled coil.

It belongs to the HEXIM family. In terms of assembly, homooligomer and heterooligomer. Core component of the 7SK RNP complex.

It localises to the nucleus. The protein localises to the cytoplasm. Its function is as follows. Transcriptional regulator which functions as a general RNA polymerase II transcription inhibitor. Core component of the 7SK RNP complex: in cooperation with 7SK snRNA sequesters P-TEFb in a large inactive 7SK snRNP complex preventing RNA polymerase II phosphorylation and subsequent transcriptional elongation. Plays a role in the regulation of DNA virus-mediated innate immune response by assembling into the HDP-RNP complex, a complex that serves as a platform for IRF3 phosphorylation and subsequent innate immune response activation through the cGAS-STING pathway. This Xenopus laevis (African clawed frog) protein is Protein HEXIM1 (hexim1).